Consider the following 37-residue polypeptide: Large ribosomal subunit protein bL36 (37 aa).

Belongs to the bacterial ribosomal protein bL36 family.

The protein is Large ribosomal subunit protein bL36 of Geobacter sp. (strain M21).